The chain runs to 152 residues: uncharacterized protein (152 aa).

It belongs to the IIV-6 145L family.

This is an uncharacterized protein from Invertebrate iridescent virus 3 (IIV-3).